We begin with the raw amino-acid sequence, 361 residues long: Queuine tRNA-ribosyltransferase (361 aa).

The Proton acceptor role is filled by Asp92. Residues 92-96 (DSGGF), Asp146, Gln189, and Gly216 each bind substrate. The interval 247-253 (GVGKPAD) is RNA binding. The active-site Nucleophile is the Asp266. The interval 271-275 (TRSGR) is RNA binding; important for wobble base 34 recognition. The Zn(2+) site is built by Cys304, Cys306, Cys309, and His335.

It belongs to the queuine tRNA-ribosyltransferase family. As to quaternary structure, homodimer. Within each dimer, one monomer is responsible for RNA recognition and catalysis, while the other monomer binds to the replacement base PreQ1. Requires Zn(2+) as cofactor.

It carries out the reaction 7-aminomethyl-7-carbaguanine + guanosine(34) in tRNA = 7-aminomethyl-7-carbaguanosine(34) in tRNA + guanine. The protein operates within tRNA modification; tRNA-queuosine biosynthesis. Catalyzes the base-exchange of a guanine (G) residue with the queuine precursor 7-aminomethyl-7-deazaguanine (PreQ1) at position 34 (anticodon wobble position) in tRNAs with GU(N) anticodons (tRNA-Asp, -Asn, -His and -Tyr). Catalysis occurs through a double-displacement mechanism. The nucleophile active site attacks the C1' of nucleotide 34 to detach the guanine base from the RNA, forming a covalent enzyme-RNA intermediate. The proton acceptor active site deprotonates the incoming PreQ1, allowing a nucleophilic attack on the C1' of the ribose to form the product. After dissociation, two additional enzymatic reactions on the tRNA convert PreQ1 to queuine (Q), resulting in the hypermodified nucleoside queuosine (7-(((4,5-cis-dihydroxy-2-cyclopenten-1-yl)amino)methyl)-7-deazaguanosine). The polypeptide is Queuine tRNA-ribosyltransferase (Rickettsia akari (strain Hartford)).